We begin with the raw amino-acid sequence, 247 residues long: Probable transcriptional regulatory protein LBF_0056 (247 aa).

This sequence belongs to the TACO1 family.

The protein localises to the cytoplasm. The polypeptide is Probable transcriptional regulatory protein LBF_0056 (Leptospira biflexa serovar Patoc (strain Patoc 1 / Ames)).